The primary structure comprises 61 residues: Insect toxin AaHIT5 (61 aa).

The 61-residue stretch at 1–61 folds into the LCN-type CS-alpha/beta domain; sequence DGYIKRHDGC…AWKSETNTCD (61 aa). Disulfide bonds link Cys-10-Cys-60, Cys-14-Cys-35, Cys-21-Cys-42, and Cys-25-Cys-44.

In terms of tissue distribution, expressed by the venom gland.

The protein resides in the secreted. Excitatory insect toxins induce a spastic paralysis. They bind voltage-independently to sodium channels (Nav) and shift the voltage of activation toward more negative potentials thereby affecting sodium channel activation and promoting spontaneous and repetitive firing. This toxin elicits excitatory activity with no flaccid paralysis despite its high degree of sequence similarity with other depressant insect toxins. This toxin is active only on insects. This chain is Insect toxin AaHIT5, found in Androctonus australis (Sahara scorpion).